Reading from the N-terminus, the 81-residue chain is Elongation factor 1-beta (81 aa).

It belongs to the EF-1-beta/EF-1-delta family.

Functionally, promotes the exchange of GDP for GTP in EF-1-alpha/GDP, thus allowing the regeneration of EF-1-alpha/GTP that could then be used to form the ternary complex EF-1-alpha/GTP/AAtRNA. In Nanoarchaeum equitans (strain Kin4-M), this protein is Elongation factor 1-beta.